Reading from the N-terminus, the 497-residue chain is Serine/threonine-protein kinase 3 (497 aa).

Position 1 is an N-acetylmethionine (Met-1). The interval 1–20 (MEQPPASKSKLKKLSEDSLT) is disordered. Phosphoserine is present on Ser-15. The Protein kinase domain maps to 27-278 (FDVLEKLGEG…ATQLLQHPFI (252 aa)). ATP-binding positions include 33–41 (LGEGSYGSV) and Lys-56. At Thr-117 the chain carries Phosphothreonine; by PKB/AKT1. Asp-146 functions as the Proton acceptor in the catalytic mechanism. The Mg(2+) site is built by Asn-151 and Asp-164. Phosphothreonine; by autocatalysis is present on Thr-180. Positions 287 to 328 (LRDLIAEAMEIKAKRHEEQQRELEEEEENSDEDELDSHTMVK) form a coiled coil. Disordered regions lie at residues 301 to 343 (RHEE…TSTM) and 368 to 394 (NSEE…SPQV). Residues 309-321 (LEEEEENSDEDEL) are compositionally biased toward acidic residues. Phosphoserine is present on Ser-316. Polar residues predominate over residues 326–343 (MVKTSSESVGTMRATSTM). Thr-336 is modified (phosphothreonine). The stretch at 366 to 387 (VINSEEEEEEEEEEEEDGTMKR) forms a coiled coil. Residues 369 to 382 (SEEEEEEEEEEEED) show a composition bias toward acidic residues. Phosphothreonine is present on Thr-384. Thr-390 is modified (phosphothreonine; by PKB/AKT1). A phosphoserine mark is found at Ser-391 and Ser-450. An SARAH domain is found at 443–490 (FDFLKNLSLEELQMRLKALDPMMEREIEELHQRYSAKRQPILDAMDAK). Residues 448 to 479 (NLSLEELQMRLKALDPMMEREIEELHQRYSAK) adopt a coiled-coil conformation.

The protein belongs to the protein kinase superfamily. STE Ser/Thr protein kinase family. STE20 subfamily. In terms of assembly, homodimer; mediated via the coiled-coil region. Interacts with NORE1, which inhibits autoactivation. Interacts with and stabilizes SAV1. Interacts with RAF1, which prevents dimerization and phosphorylation. Interacts with RASSF1. Interacts (via SARAH domain) with isoform 1 of NEK2. Interacts with ESR1 only in the presence of SAV1. Interacts with PKB/AKT1. Forms a tripartite complex with MOBKL1B and STK38. Interacts with RASSF2 (via SARAH domain). Interacts with DLG5 (via PDZ domain 3). Interacts with LATS1; this interaction is inhibited in the presence of DLG5. Interacts with MARK3 in the presence of DLG5. Interacts with RASSF5; this interaction inhibits STK3 autoactivation through heterodimerization. Interacts (when phosphorylated) with SLMAP (via FHA domain); the interaction associates STK3 with the STRIPAK complex. Mg(2+) is required as a cofactor. Post-translationally, autophosphorylated on two residues Thr-174 and Thr-180, leading to activation. Phosphorylation at Thr-117 and Thr-390 by PKB/AKT1, leads to inhibition of its: cleavage, kinase activity, autophosphorylation at Thr-180, binding to RASSF1 and nuclear translocation, and increase in its binding to RAF1. Phosphorylated at Ser-15 by PLK1, leading to activation. In terms of processing, proteolytically cleaved by caspase-3 during apoptosis. Proteolytic cleavage results in kinase activation and nuclear translocation of the truncated form (MST1/N). Ubiquitinated by TRIM69; leading to its redistribution to the perinuclear cytoskeleton.

The protein resides in the cytoplasm. It is found in the nucleus. It catalyses the reaction L-seryl-[protein] + ATP = O-phospho-L-seryl-[protein] + ADP + H(+). The catalysed reaction is L-threonyl-[protein] + ATP = O-phospho-L-threonyl-[protein] + ADP + H(+). Inhibited by the C-terminal non-catalytic region. Activated by caspase-cleavage. Full activation also requires homodimerization and autophosphorylation of Thr-180, which are inhibited by the proto-oncogene product RAF1. Activated by RASSF1 which acts by preventing its dephosphorylation. When autophosphorylated at Thr-180, recruits STRIPAK complex and promotes PP2A-mediated dephosphorylation and inactivation of STK3. Stress-activated, pro-apoptotic kinase which, following caspase-cleavage, enters the nucleus and induces chromatin condensation followed by internucleosomal DNA fragmentation. Key component of the Hippo signaling pathway which plays a pivotal role in organ size control and tumor suppression by restricting proliferation and promoting apoptosis. The core of this pathway is composed of a kinase cascade wherein STK3/MST2 and STK4/MST1, in complex with its regulatory protein SAV1, phosphorylates and activates LATS1/2 in complex with its regulatory protein MOB1, which in turn phosphorylates and inactivates YAP1 oncoprotein and WWTR1/TAZ. Phosphorylation of YAP1 by LATS2 inhibits its translocation into the nucleus to regulate cellular genes important for cell proliferation, cell death, and cell migration. STK3/MST2 and STK4/MST1 are required to repress proliferation of mature hepatocytes, to prevent activation of facultative adult liver stem cells (oval cells), and to inhibit tumor formation. Phosphorylates NKX2-1. Phosphorylates NEK2 and plays a role in centrosome disjunction by regulating the localization of NEK2 to centrosomes, and its ability to phosphorylate CROCC and CEP250. In conjunction with SAV1, activates the transcriptional activity of ESR1 through the modulation of its phosphorylation. Positively regulates RAF1 activation via suppression of the inhibitory phosphorylation of RAF1 on 'Ser-259'. Phosphorylates MOBKL1A and RASSF2. Phosphorylates MOBKL1B on 'Thr-74'. Acts cooperatively with MOBKL1B to activate STK38. This chain is Serine/threonine-protein kinase 3 (Stk3), found in Mus musculus (Mouse).